Reading from the N-terminus, the 98-residue chain is Small ribosomal subunit protein bS20 (98 aa).

A compositionally biased stretch (basic residues) spans 1 to 12 (MAPKKTTKKGGP). Residues 1–20 (MAPKKTTKKGGPQKRPSAEK) form a disordered region.

The protein belongs to the bacterial ribosomal protein bS20 family.

Its function is as follows. Binds directly to 16S ribosomal RNA. The sequence is that of Small ribosomal subunit protein bS20 from Chlamydia caviae (strain ATCC VR-813 / DSM 19441 / 03DC25 / GPIC) (Chlamydophila caviae).